A 203-amino-acid polypeptide reads, in one-letter code: MSQANAHEQALALSAAMLAIDDVILLATTGQCPERDLSALLPSLLRQNQARLEDYFLEIAPFEKGRALLVNFLINGVSSEHVRYLIQVTVLEEKLSANRALFAQLLQRLNEAESAAEHFPLLHDAMIARFADIYQASVSPAMRKILIHGNPDYLKQPQIAARVRVCLLCAVRAVGLWRAYGGSKWQVIFFRKRFLKALRALRF.

This sequence belongs to the HflD family.

It localises to the cytoplasm. Its subcellular location is the cell inner membrane. The chain is High frequency lysogenization protein HflD homolog from Dichelobacter nodosus (strain VCS1703A).